The primary structure comprises 1188 residues: DNA-directed RNA polymerase subunit beta (1188 aa).

This sequence belongs to the RNA polymerase beta chain family. In terms of assembly, the RNAP catalytic core consists of 2 alpha, 1 beta, 1 beta' and 1 omega subunit. When a sigma factor is associated with the core the holoenzyme is formed, which can initiate transcription.

It catalyses the reaction RNA(n) + a ribonucleoside 5'-triphosphate = RNA(n+1) + diphosphate. In terms of biological role, DNA-dependent RNA polymerase catalyzes the transcription of DNA into RNA using the four ribonucleoside triphosphates as substrates. This is DNA-directed RNA polymerase subunit beta from Streptococcus equi subsp. zooepidemicus (strain H70).